Here is a 227-residue protein sequence, read N- to C-terminus: Phosphoglycolate phosphatase (227 aa).

The active-site Nucleophile is the Asp14. 3 residues coordinate Mg(2+): Asp14, Asp16, and Asp177.

The protein belongs to the HAD-like hydrolase superfamily. CbbY/CbbZ/Gph/YieH family. Requires Mg(2+) as cofactor.

It carries out the reaction 2-phosphoglycolate + H2O = glycolate + phosphate. Its pathway is organic acid metabolism; glycolate biosynthesis; glycolate from 2-phosphoglycolate: step 1/1. In terms of biological role, specifically catalyzes the dephosphorylation of 2-phosphoglycolate. Is involved in the dissimilation of the intracellular 2-phosphoglycolate formed during the DNA repair of 3'-phosphoglycolate ends, a major class of DNA lesions induced by oxidative stress. This chain is Phosphoglycolate phosphatase, found in Thiobacillus denitrificans (strain ATCC 25259 / T1).